Here is a 100-residue protein sequence, read N- to C-terminus: Urease subunit gamma (100 aa).

This sequence belongs to the urease gamma subunit family. Heterotrimer of UreA (gamma), UreB (beta) and UreC (alpha) subunits. Three heterotrimers associate to form the active enzyme.

It is found in the cytoplasm. The catalysed reaction is urea + 2 H2O + H(+) = hydrogencarbonate + 2 NH4(+). Its pathway is nitrogen metabolism; urea degradation; CO(2) and NH(3) from urea (urease route): step 1/1. The sequence is that of Urease subunit gamma from Marinobacter nauticus (strain ATCC 700491 / DSM 11845 / VT8) (Marinobacter aquaeolei).